Here is a 452-residue protein sequence, read N- to C-terminus: Minor capsid protein (452 aa).

Basic and acidic residues-rich tracts occupy residues 219 to 236 (VDKP…KGKQ) and 247 to 258 (GKPDISKPGEKQ). Residues 219 to 258 (VDKPEDKPKPVFDDKGKQPTDTVPPVDNGKPDISKPGEKQ) are disordered.

The protein belongs to the closteroviridae minor capsid protein family.

The protein resides in the virion. Its function is as follows. Minor capsid protein that encapsidates the 5'-terminal portion of the viral genome. This Lettuce infectious yellows virus (isolate United States/92) (LIYV) protein is Minor capsid protein.